The sequence spans 83 residues: Acyl carrier protein (83 aa).

In terms of domain architecture, Carrier spans 2 to 77 (NEILSKIKSI…DANQYIKKYL (76 aa)). The residue at position 37 (serine 37) is an O-(pantetheine 4'-phosphoryl)serine.

The protein belongs to the acyl carrier protein (ACP) family. 4'-phosphopantetheine is transferred from CoA to a specific serine of apo-ACP by AcpS. This modification is essential for activity because fatty acids are bound in thioester linkage to the sulfhydryl of the prosthetic group.

Its subcellular location is the cytoplasm. The protein operates within lipid metabolism; fatty acid biosynthesis. Carrier of the growing fatty acid chain in fatty acid biosynthesis. This is Acyl carrier protein from Karelsulcia muelleri (strain GWSS) (Sulcia muelleri).